A 725-amino-acid chain; its full sequence is Glyoxysomal fatty acid beta-oxidation multifunctional protein MFP-a (725 aa).

Glutamate 119 functions as the Nucleophile in the catalytic mechanism. The active-site Proton acceptor is glutamate 139. Positions 723–725 match the Microbody targeting signal motif; that stretch reads SRL.

This sequence in the N-terminal section; belongs to the enoyl-CoA hydratase/isomerase family. The protein in the central section; belongs to the 3-hydroxyacyl-CoA dehydrogenase family.

Its subcellular location is the glyoxysome. The enzyme catalyses a (3S)-3-hydroxyacyl-CoA = a (2E)-enoyl-CoA + H2O. It catalyses the reaction a 4-saturated-(3S)-3-hydroxyacyl-CoA = a (3E)-enoyl-CoA + H2O. The catalysed reaction is a (3Z)-enoyl-CoA = a 4-saturated (2E)-enoyl-CoA. It carries out the reaction a (3E)-enoyl-CoA = a 4-saturated (2E)-enoyl-CoA. The enzyme catalyses (3S)-3-hydroxybutanoyl-CoA = (3R)-3-hydroxybutanoyl-CoA. It catalyses the reaction a (3S)-3-hydroxyacyl-CoA + NAD(+) = a 3-oxoacyl-CoA + NADH + H(+). It participates in lipid metabolism; fatty acid beta-oxidation. The chain is Glyoxysomal fatty acid beta-oxidation multifunctional protein MFP-a from Brassica napus (Rape).